The sequence spans 497 residues: Carboxylesterase (497 aa).

Serine 185 serves as the catalytic Acyl-ester intermediate. Residues glutamate 319 and histidine 415 each act as charge relay system in the active site.

This sequence belongs to the type-B carboxylesterase/lipase family.

It localises to the secreted. The catalysed reaction is a carboxylic ester + H2O = an alcohol + a carboxylate + H(+). The polypeptide is Carboxylesterase (Thermobifida fusca (strain YX)).